Reading from the N-terminus, the 327-residue chain is tRNA-dihydrouridine(20/20a) synthase (327 aa).

FMN is bound by residues 11–13 (PML) and Gln63. Catalysis depends on Cys93, which acts as the Proton donor. Residues Lys132, His165, 205-207 (NGG), and 227-228 (GR) each bind FMN.

This sequence belongs to the Dus family. DusA subfamily. FMN is required as a cofactor.

The catalysed reaction is 5,6-dihydrouridine(20) in tRNA + NADP(+) = uridine(20) in tRNA + NADPH + H(+). It carries out the reaction 5,6-dihydrouridine(20) in tRNA + NAD(+) = uridine(20) in tRNA + NADH + H(+). It catalyses the reaction 5,6-dihydrouridine(20a) in tRNA + NADP(+) = uridine(20a) in tRNA + NADPH + H(+). The enzyme catalyses 5,6-dihydrouridine(20a) in tRNA + NAD(+) = uridine(20a) in tRNA + NADH + H(+). Catalyzes the synthesis of 5,6-dihydrouridine (D), a modified base found in the D-loop of most tRNAs, via the reduction of the C5-C6 double bond in target uridines. Specifically modifies U20 and U20a in tRNAs. This is tRNA-dihydrouridine(20/20a) synthase from Vibrio cholerae serotype O1 (strain ATCC 39315 / El Tor Inaba N16961).